Reading from the N-terminus, the 228-residue chain is MRFTPYLVLAPTAAVAFAQLFDPLHRTASDIQQQSQSQSVNHAQIPLAKPAVGLGPAMPPSGAPQADGPANAGGGSSVMLSDVMGRDKSINLFAGFLRSIESPSQRLDDPARNTTVLAPLNSAIENLPRKPWEDPRDYSALGANAYEGEDGQGRAQRNLRRFVEAHLIPTSPWPAGEKIKPVGGDTEVWWEEKDGVKRIQPGDIEVLNVGSSVVNGEVWILKGVRNAS.

An N-terminal signal peptide occupies residues 1 to 18 (MRFTPYLVLAPTAAVAFA). A disordered region spans residues 50-74 (PAVGLGPAMPPSGAPQADGPANAGG). The 149-residue stretch at 77–225 (SVMLSDVMGR…GEVWILKGVR (149 aa)) folds into the FAS1 domain.

It localises to the vacuole. The sequence is that of FAS1 domain-containing protein NCU02579 from Neurospora crassa (strain ATCC 24698 / 74-OR23-1A / CBS 708.71 / DSM 1257 / FGSC 987).